Consider the following 313-residue polypeptide: LUC7-related splicing factor homolog (313 aa).

The disordered stretch occupies residues Arg237–Tyr313.

It belongs to the Luc7 family.

The chain is LUC7-related splicing factor homolog from Caenorhabditis elegans.